A 370-amino-acid chain; its full sequence is Aldo-keto reductase dtxS3 (370 aa).

Asp-78 serves as a coordination point for NADP(+). Tyr-83 acts as the Proton donor in catalysis. Position 174 (His-174) interacts with substrate. NADP(+)-binding positions include Ser-204 to Ser-205, Gln-230, Gly-259 to Arg-269, and Gly-333 to Ala-341.

This sequence belongs to the aldo/keto reductase family.

The protein operates within secondary metabolite biosynthesis. Aldo-keto reductase; part of the gene cluster that mediates the biosynthesis of destruxins, insecticidal cyclic hexadepsipeptides which induce flaccid paralysis and visceral muscle contraction in insects through targeting the calcium channels and vacuolar-type ATPases. The aldo-keto reductase dtxS3 converts alpha-ketoisocaproic acid from deaminated leucine into alpha-hydroxyisocaproic acid (HIC), which is the first substrate for destruxin assembly by dtxS1. L-aspartate decarboxylase dtxS4 converts aspartic acid into beta-alanine, the last substrate for the destruxin assembly line performed by dtxS1. The nonribosomal peptide synthetase dtxS1 synthesizes destruxins B and B2, whereas the cytochrome P450 monooxygenase dtxS2 is required to convert destruxin B into other destruxin derivatives, including destructins C, D, A and E. Destruxin E-diol (ED) is further produced in a non-enzymatic manner from destruxin E. Destruxins play an important role in virulence and escape from insect host immune defenses. This is Aldo-keto reductase dtxS3 from Metarhizium robertsii (strain ARSEF 23 / ATCC MYA-3075) (Metarhizium anisopliae (strain ARSEF 23)).